The chain runs to 255 residues: Tritrans,polycis-undecaprenyl-diphosphate synthase (geranylgeranyl-diphosphate specific) (255 aa).

The active site involves D34. Position 34 (D34) interacts with Mg(2+). Substrate-binding positions include 35 to 38, H51, and 79 to 81; these read GNRR and STE. N82 acts as the Proton acceptor in catalysis. Substrate-binding positions include F83, R85, R204, and 210–212; that span reads RIS. A Mg(2+)-binding site is contributed by E223.

The protein belongs to the UPP synthase family. In terms of assembly, homodimer. Requires Mg(2+) as cofactor.

It carries out the reaction geranylgeranyl diphosphate + 7 isopentenyl diphosphate = tri-trans,hepta-cis-undecaprenyl diphosphate + 7 diphosphate. In terms of biological role, catalyzes the sequential condensation of isopentenyl diphosphate (IPP) with geranylgeranyl diphosphate (GGPP) to yield (2Z,6Z,10Z,14Z,18Z,22Z,26Z,30E,34E,38E)-undecaprenyl diphosphate (tritrans,heptacis-UPP). It is probably the precursor of glycosyl carrier lipids. In Picrophilus torridus (strain ATCC 700027 / DSM 9790 / JCM 10055 / NBRC 100828 / KAW 2/3), this protein is Tritrans,polycis-undecaprenyl-diphosphate synthase (geranylgeranyl-diphosphate specific).